The sequence spans 269 residues: Mitochondrial acidic protein mam33 (269 aa).

Belongs to the MAM33 family.

Its subcellular location is the cytoplasm. It localises to the mitochondrion matrix. The chain is Mitochondrial acidic protein mam33 from Schizosaccharomyces pombe (strain 972 / ATCC 24843) (Fission yeast).